Here is a 446-residue protein sequence, read N- to C-terminus: Methionine aminopeptidase 2 (446 aa).

Residues 1–91 (MAAQVTDALK…PPRVLLSNLF (91 aa)) are disordered. A compositionally biased stretch (acidic residues) spans 36 to 48 (EAEDSDDEEEEPV). A compositionally biased stretch (basic residues) spans 59–72 (KKKRKRKKKPKKKA). H199 contributes to the substrate binding site. A divalent metal cation is bound by residues D219, D230, and H299. Substrate is bound at residue H307. Positions 332 and 427 each coordinate a divalent metal cation.

Belongs to the peptidase M24A family. Methionine aminopeptidase eukaryotic type 2 subfamily. It depends on Co(2+) as a cofactor. Zn(2+) is required as a cofactor. The cofactor is Mn(2+). Fe(2+) serves as cofactor.

The protein resides in the cytoplasm. The enzyme catalyses Release of N-terminal amino acids, preferentially methionine, from peptides and arylamides.. Cotranslationally removes the N-terminal methionine from nascent proteins. The N-terminal methionine is often cleaved when the second residue in the primary sequence is small and uncharged (Met-Ala-, Cys, Gly, Pro, Ser, Thr, or Val). The protein is Methionine aminopeptidase 2 of Sclerotinia sclerotiorum (strain ATCC 18683 / 1980 / Ss-1) (White mold).